Here is a 136-residue protein sequence, read N- to C-terminus: D-ribose pyranase (136 aa).

Catalysis depends on His20, which acts as the Proton donor. Residues Asp28, His98, and 120 to 122 (YAN) contribute to the substrate site.

Belongs to the RbsD / FucU family. RbsD subfamily. As to quaternary structure, homodecamer.

It is found in the cytoplasm. It carries out the reaction beta-D-ribopyranose = beta-D-ribofuranose. Its pathway is carbohydrate metabolism; D-ribose degradation; D-ribose 5-phosphate from beta-D-ribopyranose: step 1/2. Its function is as follows. Catalyzes the interconversion of beta-pyran and beta-furan forms of D-ribose. The protein is D-ribose pyranase of Geobacillus kaustophilus (strain HTA426).